A 388-amino-acid polypeptide reads, in one-letter code: Succinate--CoA ligase [ADP-forming] subunit beta (388 aa).

Residues lysine 9 to glutamate 244 enclose the ATP-grasp domain. ATP contacts are provided by residues lysine 46, glycine 53 to glycine 55, glutamate 99, leucine 102, and glutamate 107. Residues asparagine 199 and aspartate 213 each contribute to the Mg(2+) site. Substrate is bound by residues asparagine 265 and glycine 322–leucine 324.

Belongs to the succinate/malate CoA ligase beta subunit family. In terms of assembly, heterotetramer of two alpha and two beta subunits. Mg(2+) serves as cofactor.

It catalyses the reaction succinate + ATP + CoA = succinyl-CoA + ADP + phosphate. The catalysed reaction is GTP + succinate + CoA = succinyl-CoA + GDP + phosphate. Its pathway is carbohydrate metabolism; tricarboxylic acid cycle; succinate from succinyl-CoA (ligase route): step 1/1. Functionally, succinyl-CoA synthetase functions in the citric acid cycle (TCA), coupling the hydrolysis of succinyl-CoA to the synthesis of either ATP or GTP and thus represents the only step of substrate-level phosphorylation in the TCA. The beta subunit provides nucleotide specificity of the enzyme and binds the substrate succinate, while the binding sites for coenzyme A and phosphate are found in the alpha subunit. This chain is Succinate--CoA ligase [ADP-forming] subunit beta, found in Syntrophobacter fumaroxidans (strain DSM 10017 / MPOB).